Consider the following 134-residue polypeptide: Phosphoribosyl-AMP cyclohydrolase (134 aa).

A Mg(2+)-binding site is contributed by D80. Zn(2+) is bound at residue C81. Residues D82 and D84 each coordinate Mg(2+). Zn(2+)-binding residues include C98 and C105.

It belongs to the PRA-CH family. In terms of assembly, homodimer. Mg(2+) serves as cofactor. It depends on Zn(2+) as a cofactor.

The protein resides in the cytoplasm. It carries out the reaction 1-(5-phospho-beta-D-ribosyl)-5'-AMP + H2O = 1-(5-phospho-beta-D-ribosyl)-5-[(5-phospho-beta-D-ribosylamino)methylideneamino]imidazole-4-carboxamide. It functions in the pathway amino-acid biosynthesis; L-histidine biosynthesis; L-histidine from 5-phospho-alpha-D-ribose 1-diphosphate: step 3/9. Functionally, catalyzes the hydrolysis of the adenine ring of phosphoribosyl-AMP. The polypeptide is Phosphoribosyl-AMP cyclohydrolase (Janthinobacterium sp. (strain Marseille) (Minibacterium massiliensis)).